A 79-amino-acid chain; its full sequence is D-alanyl carrier protein (79 aa).

Residues 1 to 77 (MDVKAEVIEI…KIVEGVTELR (77 aa)) enclose the Carrier domain. Ser35 bears the O-(pantetheine 4'-phosphoryl)serine mark.

This sequence belongs to the DltC family. Post-translationally, 4'-phosphopantetheine is transferred from CoA to a specific serine of apo-DCP.

Its subcellular location is the cytoplasm. Its pathway is cell wall biogenesis; lipoteichoic acid biosynthesis. Carrier protein involved in the D-alanylation of lipoteichoic acid (LTA). The loading of thioester-linked D-alanine onto DltC is catalyzed by D-alanine--D-alanyl carrier protein ligase DltA. The DltC-carried D-alanyl group is further transferred to cell membrane phosphatidylglycerol (PG) by forming an ester bond, probably catalyzed by DltD. D-alanylation of LTA plays an important role in modulating the properties of the cell wall in Gram-positive bacteria, influencing the net charge of the cell wall. The protein is D-alanyl carrier protein of Streptococcus gordonii (strain Challis / ATCC 35105 / BCRC 15272 / CH1 / DL1 / V288).